The primary structure comprises 147 residues: MTTYSPKVGEVQRNWYVIDAEDIVLGRLATTAANLLRGKHKPQYAPHIDTGDFVVVVNASKIALTGKKATDSLRYDHSGRPGGLRVTSIGEMLAKNPRRAVERAVWGMMPKNKLSRQQLKKLKVYGGPEHPHAAQNPQPYEITQIAQ.

Positions 126–147 are disordered; it reads GGPEHPHAAQNPQPYEITQIAQ.

This sequence belongs to the universal ribosomal protein uL13 family. In terms of assembly, part of the 50S ribosomal subunit.

In terms of biological role, this protein is one of the early assembly proteins of the 50S ribosomal subunit, although it is not seen to bind rRNA by itself. It is important during the early stages of 50S assembly. This chain is Large ribosomal subunit protein uL13, found in Cutibacterium acnes (strain DSM 16379 / KPA171202) (Propionibacterium acnes).